Reading from the N-terminus, the 148-residue chain is U2 snRNP component IST3 (148 aa).

The RRM domain occupies A31–Y109.

This sequence belongs to the IST3 family. In terms of assembly, component of the 45S U1.U2.U4/U6.U5 penta-snRNP particle, a subcomplex of the spliceosome. Belongs to the CWC complex (or CEF1-associated complex), a spliceosome sub-complex reminiscent of a late-stage spliceosome composed of the U2, U5 and U6 snRNAs and at least BUD13, BUD31, BRR2, CDC40, CEF1, CLF1, CUS1, CWC2, CWC15, CWC21, CWC22, CWC23, CWC24, CWC25, CWC27, ECM2, HSH155, IST3, ISY1, LEA1, MSL1, NTC20, PRP8, PRP9, PRP11, PRP19, PRP21, PRP22, PRP45, PRP46, SLU7, SMB1, SMD1, SMD2, SMD3, SMX2, SMX3, SNT309, SNU114, SPP2, SYF1, SYF2, RSE1 and YJU2. Belongs to the pre-mRNA retention and splicing (RES) complex composed of at least BUD13, IST3 and PML1. Subunit of the U2 snRNP. Interacts with RDS3.

It localises to the cytoplasm. The protein localises to the nucleus. Required for pre-mRNA splicing and spliceosome assembly. As part of the pre-mRNA retention and splicing (RES) complex, required for nuclear pre-mRNA retention and efficient splicing. Required for MER1-activated splicing. The chain is U2 snRNP component IST3 (IST3) from Saccharomyces cerevisiae (strain ATCC 204508 / S288c) (Baker's yeast).